The sequence spans 596 residues: Cell adhesion molecule CEACAM20 (596 aa).

Positions 1 to 30 (MGPADSWGHHWMGILLSASLCTVWSPPAAA) are cleaved as a signal peptide. Topologically, residues 31 to 450 (QLTLNANPLD…SSLSSGAIAG (420 aa)) are extracellular. 4 consecutive Ig-like C2-type domains span residues 58–154 (PQIH…PIFL), 160–246 (PDPV…GTLK), 256–341 (PQVV…LELT), and 346–432 (PDQV…TSVL). Cysteine 90 and cysteine 138 are joined by a disulfide. N-linked (GlcNAc...) asparagine glycosylation is found at asparagine 96 and asparagine 105. A disulfide bond links cysteine 276 and cysteine 324. 5 N-linked (GlcNAc...) asparagine glycosylation sites follow: asparagine 280, asparagine 306, asparagine 317, asparagine 368, and asparagine 415. Cysteine 375 and cysteine 416 are joined by a disulfide. A helical membrane pass occupies residues 451 to 471 (IVIGILAVIAVASELGYFLCI). Residues 472–585 (RNARRPSRKT…SIYEELVNPE (114 aa)) are Cytoplasmic-facing. Disordered stretches follow at residues 477 to 510 (PSRKTTEDPSHETSQPIPKEEHPTEPSSESLSPE) and 527 to 563 (QPPDLPEETYETKLPSASRRGNSFSPWKPPPKPLMPP). Over residues 501–510 (EPSSESLSPE) the composition is skewed to low complexity. A compositionally biased stretch (pro residues) spans 553 to 562 (WKPPPKPLMP). Phosphotyrosine occurs at positions 578 and 589.

It belongs to the immunoglobulin superfamily. CEA family. As to quaternary structure, interacts (via extracellular domain) with PTPRH (via extracellular domain); the interaction dephosphorylates CEACAM20. Interacts (phosphorylated form) with SYK (via SH2 domains); the interaction further enhances CEACAM20 phosphorylation. Post-translationally, phosphorylated on tyrosine residues by SYK, SRC and FYN in vitro.

It is found in the cell projection. It localises to the microvillus membrane. Its subcellular location is the apical cell membrane. In terms of biological role, together with the tyrosine-protein kinase SYK, enhances production of the cytokine CXCL8/IL-8 via the NFKB pathway and may thus have a role in the intestinal immune response. In Homo sapiens (Human), this protein is Cell adhesion molecule CEACAM20.